Reading from the N-terminus, the 270-residue chain is LIM zinc-binding domain-containing Nebulette (270 aa).

Residues 3 to 63 (PQCARCGKVV…NAHYPKQSFT (61 aa)) enclose the LIM zinc-binding domain. Residues 61-95 (SFTTVADTPENLRLKQQSELQSQVKYKRDFEESKG) form a Nebulin 1 repeat. Arg-96 is subject to Omega-N-methylarginine. Residues 97–131 (GFSIVTDTPELQRLKRTQEQISNVKYHEDFEKTKG) form a Nebulin 2 repeat. Arg-132 is modified (omega-N-methylarginine). A Nebulin 3 repeat occupies 133–159 (GFTPVVDDPVTERVRKSTQVVSDAAYK). Thr-135 bears the Phosphothreonine mark. Residues 210 to 270 (AHLRTYRAMY…LPANYIEFVN (61 aa)) enclose the SH3 domain. Phosphoserine is present on Ser-230.

The protein resides in the cytoplasm. Its function is as follows. Binds to actin and plays an important role in the assembly of the Z-disk. Isoform 2 might play a role in the assembly of focal adhesion. The sequence is that of LIM zinc-binding domain-containing Nebulette (Nebl) from Mus musculus (Mouse).